The chain runs to 28 residues: Alkaline serine protease NJP (28 aa).

Its activity is regulated as follows. Inhibited by PMSF. Not or very weakly inhibited by EDTA, EGTA, beta-mercaptoethanol, benzamidine, aprotinin, iodoacetic acid, pepstatin A and SBTI. Functionally, alkaline thrombin-like serine protease. Has fibrinolytic and fibrinogenolytic but not plasminogenolytic activity. Cleaves fibrinogen chains Aalpha, Bbeta and gamma chains in that order. Cleaves after Arg and Lys residues. In Hediste japonica (Polychaete worm), this protein is Alkaline serine protease NJP.